Consider the following 520-residue polypeptide: Probable methylmalonate-semialdehyde/malonate-semialdehyde dehydrogenase [acylating], mitochondrial (520 aa).

Positions 169, 171, 195, 198, 199, and 248 each coordinate NAD(+). The active-site Nucleophile is the Cys303. Glu403 contributes to the NAD(+) binding site.

The protein belongs to the aldehyde dehydrogenase family. As to quaternary structure, homotetramer.

It is found in the mitochondrion. The catalysed reaction is 2-methyl-3-oxopropanoate + NAD(+) + CoA + H2O = propanoyl-CoA + hydrogencarbonate + NADH + H(+). It catalyses the reaction 3-oxopropanoate + NAD(+) + CoA + H2O = hydrogencarbonate + acetyl-CoA + NADH + H(+). Probable malonate and methylmalonate semialdehyde dehydrogenase involved in the catabolism of valine, thymine, and compounds catabolized by way of beta-alanine, including uracil and cytidine. The sequence is that of Probable methylmalonate-semialdehyde/malonate-semialdehyde dehydrogenase [acylating], mitochondrial from Drosophila melanogaster (Fruit fly).